The chain runs to 65 residues: Large ribosomal subunit protein bL33m (65 aa).

This sequence belongs to the bacterial ribosomal protein bL33 family. As to quaternary structure, component of the mitochondrial ribosome large subunit (39S) which comprises a 16S rRNA and about 50 distinct proteins.

The protein localises to the mitochondrion. This is Large ribosomal subunit protein bL33m (mRpL33) from Anopheles gambiae (African malaria mosquito).